The sequence spans 196 residues: Imidazoleglycerol-phosphate dehydratase (196 aa).

Belongs to the imidazoleglycerol-phosphate dehydratase family.

Its subcellular location is the cytoplasm. The catalysed reaction is D-erythro-1-(imidazol-4-yl)glycerol 3-phosphate = 3-(imidazol-4-yl)-2-oxopropyl phosphate + H2O. It functions in the pathway amino-acid biosynthesis; L-histidine biosynthesis; L-histidine from 5-phospho-alpha-D-ribose 1-diphosphate: step 6/9. This chain is Imidazoleglycerol-phosphate dehydratase, found in Ralstonia pickettii (strain 12J).